Here is an 805-residue protein sequence, read N- to C-terminus: DNA gyrase subunit B (805 aa).

Residues 431 to 546 form the Toprim domain; it reads CEMYIVEGDS…NECVYIAQPP (116 aa). The Mg(2+) site is built by Glu437, Asp511, and Asp513.

Belongs to the type II topoisomerase GyrB family. In terms of assembly, heterotetramer, composed of two GyrA and two GyrB chains. In the heterotetramer, GyrA contains the active site tyrosine that forms a transient covalent intermediate with DNA, while GyrB binds cofactors and catalyzes ATP hydrolysis. It depends on Mg(2+) as a cofactor. Mn(2+) serves as cofactor. Requires Ca(2+) as cofactor.

The protein resides in the cytoplasm. It carries out the reaction ATP-dependent breakage, passage and rejoining of double-stranded DNA.. A type II topoisomerase that negatively supercoils closed circular double-stranded (ds) DNA in an ATP-dependent manner to modulate DNA topology and maintain chromosomes in an underwound state. Negative supercoiling favors strand separation, and DNA replication, transcription, recombination and repair, all of which involve strand separation. Also able to catalyze the interconversion of other topological isomers of dsDNA rings, including catenanes and knotted rings. Type II topoisomerases break and join 2 DNA strands simultaneously in an ATP-dependent manner. This is DNA gyrase subunit B from Chlamydia pneumoniae (Chlamydophila pneumoniae).